Reading from the N-terminus, the 804-residue chain is Leucine--tRNA ligase (804 aa).

The 'HIGH' region signature appears at 39-50; it reads PFPSGKGLHVGH. Positions 573 to 577 match the 'KMSKS' region motif; sequence KMSKS. ATP is bound at residue lysine 576.

Belongs to the class-I aminoacyl-tRNA synthetase family.

The protein localises to the cytoplasm. It carries out the reaction tRNA(Leu) + L-leucine + ATP = L-leucyl-tRNA(Leu) + AMP + diphosphate. This chain is Leucine--tRNA ligase, found in Lactobacillus gasseri (strain ATCC 33323 / DSM 20243 / BCRC 14619 / CIP 102991 / JCM 1131 / KCTC 3163 / NCIMB 11718 / NCTC 13722 / AM63).